The following is a 394-amino-acid chain: Acryloyl-CoA reductase (NADH) (394 aa).

FAD-binding positions include 135–144 (FALTEPNAGS) and 170–172 (FIS). S144 lines the substrate pocket. 254–257 (DGAR) is a substrate binding site. FAD contacts are provided by residues R282, Q293, and 350-354 (QIHGG). E377 serves as the catalytic Proton acceptor. G378 provides a ligand contact to substrate. 379-381 (TSE) is an FAD binding site.

As to quaternary structure, heterohexadecamer; tetramer of tetramers. Each tetramer is composed of 2 alpha (AcrC), a beta (AcrA) and a gamma (AcrB) subunit. Requires FAD as cofactor.

The protein resides in the cytoplasm. It catalyses the reaction propanoyl-CoA + NAD(+) = acryloyl-CoA + NADH + H(+). Probable catalytic subunit of the acryloyl-CoA reductase complex involved in the pathway of L-alanine fermentation. Catalyzes the irreversible NADH-dependent formation of propionyl-CoA from acryloyl-CoA. It can also use 3-buten-2-one as substrate. The polypeptide is Acryloyl-CoA reductase (NADH) (acrC) (Anaerotignum propionicum (Clostridium propionicum)).